Here is a 61-residue protein sequence, read N- to C-terminus: Probable tautomerase LL0574 (61 aa).

The active-site Proton acceptor; via imino nitrogen is the P2.

It belongs to the 4-oxalocrotonate tautomerase family.

This Lactococcus lactis subsp. lactis (strain IL1403) (Streptococcus lactis) protein is Probable tautomerase LL0574.